The sequence spans 237 residues: 7-cyano-7-deazaguanine synthase (237 aa).

9–19 serves as a coordination point for ATP; the sequence is YSGGLDSTTCL. 4 residues coordinate Zn(2+): Cys189, Cys199, Cys202, and Cys205.

It belongs to the QueC family. It depends on Zn(2+) as a cofactor.

The enzyme catalyses 7-carboxy-7-deazaguanine + NH4(+) + ATP = 7-cyano-7-deazaguanine + ADP + phosphate + H2O + H(+). Its pathway is purine metabolism; 7-cyano-7-deazaguanine biosynthesis. Functionally, catalyzes the ATP-dependent conversion of 7-carboxy-7-deazaguanine (CDG) to 7-cyano-7-deazaguanine (preQ(0)). This chain is 7-cyano-7-deazaguanine synthase, found in Geobacter sulfurreducens (strain ATCC 51573 / DSM 12127 / PCA).